Reading from the N-terminus, the 509-residue chain is 2,3-bisphosphoglycerate-independent phosphoglycerate mutase (509 aa).

Aspartate 11 lines the Mn(2+) pocket. Tyrosine 35 is subject to Phosphotyrosine. Serine 61 serves as a coordination point for Mn(2+). Serine 61 (phosphoserine intermediate) is an active-site residue. Residues histidine 122, arginine 152 to aspartate 153, arginine 184, arginine 190, arginine 260 to arginine 263, and lysine 335 contribute to the substrate site. Mn(2+) contacts are provided by aspartate 402, histidine 406, aspartate 443, histidine 444, and histidine 461.

Belongs to the BPG-independent phosphoglycerate mutase family. In terms of assembly, monomer. Mn(2+) serves as cofactor.

The enzyme catalyses (2R)-2-phosphoglycerate = (2R)-3-phosphoglycerate. Its pathway is carbohydrate degradation; glycolysis; pyruvate from D-glyceraldehyde 3-phosphate: step 3/5. In terms of biological role, essential for rapid growth and for sporulation. Catalyzes the interconversion of 2-phosphoglycerate and 3-phosphoglycerate. This is 2,3-bisphosphoglycerate-independent phosphoglycerate mutase from Bacillus thuringiensis (strain Al Hakam).